A 320-amino-acid chain; its full sequence is MAEPLLSEFQHQPQTSNCTGAVAVHEERNPDRPPGAEERVPEEDSRWQSRASPKSGGSPGHGGEGSLEPQPSPLKTQVCPESSCPEAGEKGQNGDDLSAGGAPPQQRQVGKKKHRRRPSKKKRLWKPYYTLTWEEKKKFDEKQSLRASRIRAEMFAKGQPVAPYNTTQFLMDDHDQEEPDLKTGLYPKRAAAKSDDTSDEDFMEEAGEEDGGSDGMGGDGSEFLQRDFSETYERYHAESLQNMSKQELIKEYLELEKCLSRMEDENNRLRLESQRLDGDDARVRELELELDRLRAENLQLLTENELHRQQERAPLSNFGD.

Residues 1–124 are disordered; that stretch reads MAEPLLSEFQ…RRRPSKKKRL (124 aa). The span at 9–19 shows a compositional bias: polar residues; sequence FQHQPQTSNCT. The span at 24–47 shows a compositional bias: basic and acidic residues; that stretch reads VHEERNPDRPPGAEERVPEEDSRW. At Ser-98 the chain carries Phosphoserine. Basic residues predominate over residues 109–124; it reads VGKKKHRRRPSKKKRL. A basic region; mediates nuclear localization and interaction with 7SK snRNA and NR3C1 region spans residues 111 to 138; sequence KKKHRRRPSKKKRLWKPYYTLTWEEKKK. The segment at 163-166 is interaction with P-TEFb; the sequence is PYNT. The segment at 171–211 is autoinhibitory acidic region; in absence of 7SK snRNA interacts with the basic region preventing interaction with P-TEFb and modulating subcellular localization; that stretch reads MDDHDQEEPDLKTGLYPKRAAAKSDDTSDEDFMEEAGEEDG. The segment at 174–223 is disordered; sequence HDQEEPDLKTGLYPKRAAAKSDDTSDEDFMEEAGEEDGGSDGMGGDGSEF. Position 194 is a phosphoserine (Ser-194). A Phosphothreonine modification is found at Thr-197. The segment covering 197 to 212 has biased composition (acidic residues); the sequence is TSDEDFMEEAGEEDGG. A phosphoserine mark is found at Ser-198, Ser-213, and Ser-221. Residues 244–310 are a coiled coil; it reads SKQELIKEYL…LTENELHRQQ (67 aa). Residues 247–275 form a mediates interaction with CCNT1 region; that stretch reads ELIKEYLELEKCLSRMEDENNRLRLESQR. The tract at residues 271–316 is required for inhibition of ESR1-dependent transcription; sequence LESQRLDGDDARVRELELELDRLRAENLQLLTENELHRQQERAPLS.

Belongs to the HEXIM family. As to quaternary structure, homooligomer and heterooligomer with HEXIM2; probably dimeric. Core component of the 7SK RNP complex, at least composed of 7SK RNA, LARP7, MEPCE, HEXIM1 (or HEXIM2) and P-TEFb (composed of CDK9 and CCNT1/cyclin-T1). Interacts with the N-CoR complex through NCOR1. Interacts with ESR1 and NR3C1. May interact with NF-kappa-B through RELA. Interacts with CCNT2; mediates formation of a tripartite complex with KPNA2. Part of the HDP-RNP complex composed of at least HEXIM1, PRKDC, XRCC5, XRCC6, paraspeckle proteins (SFPQ, NONO, PSPC1, RBM14, and MATR3) and NEAT1 non-coding RNA.

It is found in the nucleus. It localises to the cytoplasm. In terms of biological role, transcriptional regulator which functions as a general RNA polymerase II transcription inhibitor. Core component of the 7SK RNP complex: in cooperation with 7SK snRNA sequesters P-TEFb in a large inactive 7SK snRNP complex preventing RNA polymerase II phosphorylation and subsequent transcriptional elongation. May also regulate NF-kappa-B, ESR1, NR3C1 and CIITA-dependent transcriptional activity. Plays a role in the regulation of DNA virus-mediated innate immune response by assembling into the HDP-RNP complex, a complex that serves as a platform for IRF3 phosphorylation and subsequent innate immune response activation through the cGAS-STING pathway. The sequence is that of Protein HEXIM1 (HEXIM1) from Bos taurus (Bovine).